The chain runs to 456 residues: Bifunctional protein GlmU (456 aa).

Positions 1-229 (MLNNTMSVVI…ISETDGVNNR (229 aa)) are pyrophosphorylase. UDP-N-acetyl-alpha-D-glucosamine-binding positions include 11-14 (LAAG), Lys25, Gln76, 81-82 (GT), 103-105 (YGD), Gly140, Glu154, Asn169, and Asn227. Residue Asp105 participates in Mg(2+) binding. Asn227 lines the Mg(2+) pocket. Residues 230-250 (LQLSRLERIYQAEQAEKLLLA) are linker. An N-acetyltransferase region spans residues 251–456 (GVMLRDPARF…QGWQRPVKKK (206 aa)). UDP-N-acetyl-alpha-D-glucosamine contacts are provided by Arg333 and Lys351. The active-site Proton acceptor is His363. Residues Tyr366 and Asn377 each contribute to the UDP-N-acetyl-alpha-D-glucosamine site. Residues Ala380, 386-387 (NY), Ser405, Ala423, and Arg440 each bind acetyl-CoA.

The protein in the N-terminal section; belongs to the N-acetylglucosamine-1-phosphate uridyltransferase family. This sequence in the C-terminal section; belongs to the transferase hexapeptide repeat family. Homotrimer. Mg(2+) is required as a cofactor.

It is found in the cytoplasm. The enzyme catalyses alpha-D-glucosamine 1-phosphate + acetyl-CoA = N-acetyl-alpha-D-glucosamine 1-phosphate + CoA + H(+). It catalyses the reaction N-acetyl-alpha-D-glucosamine 1-phosphate + UTP + H(+) = UDP-N-acetyl-alpha-D-glucosamine + diphosphate. Its pathway is nucleotide-sugar biosynthesis; UDP-N-acetyl-alpha-D-glucosamine biosynthesis; N-acetyl-alpha-D-glucosamine 1-phosphate from alpha-D-glucosamine 6-phosphate (route II): step 2/2. It functions in the pathway nucleotide-sugar biosynthesis; UDP-N-acetyl-alpha-D-glucosamine biosynthesis; UDP-N-acetyl-alpha-D-glucosamine from N-acetyl-alpha-D-glucosamine 1-phosphate: step 1/1. The protein operates within bacterial outer membrane biogenesis; LPS lipid A biosynthesis. Functionally, catalyzes the last two sequential reactions in the de novo biosynthetic pathway for UDP-N-acetylglucosamine (UDP-GlcNAc). The C-terminal domain catalyzes the transfer of acetyl group from acetyl coenzyme A to glucosamine-1-phosphate (GlcN-1-P) to produce N-acetylglucosamine-1-phosphate (GlcNAc-1-P), which is converted into UDP-GlcNAc by the transfer of uridine 5-monophosphate (from uridine 5-triphosphate), a reaction catalyzed by the N-terminal domain. In Enterobacter sp. (strain 638), this protein is Bifunctional protein GlmU.